The sequence spans 138 residues: Small ribosomal subunit protein uS8c (138 aa).

The protein belongs to the universal ribosomal protein uS8 family. As to quaternary structure, part of the 30S ribosomal subunit.

Its subcellular location is the plastid. The protein resides in the chloroplast. Its function is as follows. One of the primary rRNA binding proteins, it binds directly to 16S rRNA central domain where it helps coordinate assembly of the platform of the 30S subunit. The protein is Small ribosomal subunit protein uS8c (rps8) of Oenothera elata subsp. hookeri (Hooker's evening primrose).